Consider the following 348-residue polypeptide: tRNA pseudouridine synthase D (348 aa).

F26 contacts substrate. The active-site Nucleophile is the D79. N128 contributes to the substrate binding site. Residues 154–302 (GVPNYFGSQR…VDPARRALLL (149 aa)) form the TRUD domain. F328 lines the substrate pocket.

Belongs to the pseudouridine synthase TruD family.

It carries out the reaction uridine(13) in tRNA = pseudouridine(13) in tRNA. In terms of biological role, responsible for synthesis of pseudouridine from uracil-13 in transfer RNAs. This chain is tRNA pseudouridine synthase D, found in Serratia proteamaculans (strain 568).